Here is a 332-residue protein sequence, read N- to C-terminus: MRYAVFIFLIVLIDLIYCWNSKRSFFIPDFLGSGDGTPKSKTESVIEERMEYGRMILLVCNKTCAKHRSDIPLWLKEFNQKKGYQEPETITYYYHTYRQAVSFIDTNETDVFPNLIYFIGVKRVVFNGDVNIREDVNDWIASLDQLILLEPRVYEDLNVILSDTSNCSSKYLLLADRPKCPQPSWSIVARIAQDHGIQPVKIGHPLDGLTHVLLYKRMPYLSEASCHLSVLLYENSYSDFGDDINPLVVSDWITTLLPLEEGSCPALFETYWHPIVDELTELQQIFYSAELEISERNKRPAFVLVGLTGGIAVIILAFSIFWGLNGSGFNKD.

The signal sequence occupies residues 1–18 (MRYAVFIFLIVLIDLIYC). At 19-301 (WNSKRSFFIP…EISERNKRPA (283 aa)) the chain is on the extracellular side. Residues asparagine 61, asparagine 107, and asparagine 166 are each glycosylated (N-linked (GlcNAc...) asparagine). A helical transmembrane segment spans residues 302 to 322 (FVLVGLTGGIAVIILAFSIFW). Residues 323 to 332 (GLNGSGFNKD) are Cytoplasmic-facing.

May form a complex with sup-9 and unc-93 where sup-10 and unc-93 act as regulatory subunits of the two pore potassium channel sup-9. Sup-10 may regulate sup-9 via sup-18. Low levels in body-wall muscles, eight vulval muscles, intestinal muscles and anal depressor muscle.

The protein localises to the membrane. In terms of biological role, may contribute to coordination of muscle contraction as regulatory subunit of a nonessential potassium channel complex. The sequence is that of Putative potassium channel regulatory protein sup-10 from Caenorhabditis elegans.